Consider the following 508-residue polypeptide: Probable cytosol aminopeptidase (508 aa).

Residues K274 and D279 each contribute to the Mn(2+) site. Residue K286 is part of the active site. D297, D356, and E358 together coordinate Mn(2+). R360 is a catalytic residue.

Belongs to the peptidase M17 family. Requires Mn(2+) as cofactor.

The protein resides in the cytoplasm. It catalyses the reaction Release of an N-terminal amino acid, Xaa-|-Yaa-, in which Xaa is preferably Leu, but may be other amino acids including Pro although not Arg or Lys, and Yaa may be Pro. Amino acid amides and methyl esters are also readily hydrolyzed, but rates on arylamides are exceedingly low.. The enzyme catalyses Release of an N-terminal amino acid, preferentially leucine, but not glutamic or aspartic acids.. In terms of biological role, presumably involved in the processing and regular turnover of intracellular proteins. Catalyzes the removal of unsubstituted N-terminal amino acids from various peptides. In Paraburkholderia xenovorans (strain LB400), this protein is Probable cytosol aminopeptidase.